The following is a 649-amino-acid chain: Acetyl-coenzyme A synthetase (649 aa).

CoA-binding positions include 189-192 (RGGK), Thr-311, and Asn-335. Residues 387–389 (GEP), 411–416 (DTWWQT), Asp-500, and Arg-515 contribute to the ATP site. Ser-523 is a CoA binding site. Arg-526 provides a ligand contact to ATP. Mg(2+) is bound by residues Val-537, His-539, and Val-542. Residue Arg-584 coordinates CoA. The residue at position 609 (Lys-609) is an N6-acetyllysine.

The protein belongs to the ATP-dependent AMP-binding enzyme family. Mg(2+) serves as cofactor. Acetylated. Deacetylation by the SIR2-homolog deacetylase activates the enzyme.

It carries out the reaction acetate + ATP + CoA = acetyl-CoA + AMP + diphosphate. Functionally, catalyzes the conversion of acetate into acetyl-CoA (AcCoA), an essential intermediate at the junction of anabolic and catabolic pathways. AcsA undergoes a two-step reaction. In the first half reaction, AcsA combines acetate with ATP to form acetyl-adenylate (AcAMP) intermediate. In the second half reaction, it can then transfer the acetyl group from AcAMP to the sulfhydryl group of CoA, forming the product AcCoA. This Sinorhizobium fredii (strain NBRC 101917 / NGR234) protein is Acetyl-coenzyme A synthetase.